The sequence spans 540 residues: Chaperonin GroEL (540 aa).

ATP is bound by residues 29 to 32 (TIGP), 86 to 90 (DGTTT), glycine 413, 476 to 478 (NAA), and aspartate 492.

This sequence belongs to the chaperonin (HSP60) family. Forms a cylinder of 14 subunits composed of two heptameric rings stacked back-to-back. Interacts with the co-chaperonin GroES.

The protein resides in the cytoplasm. The catalysed reaction is ATP + H2O + a folded polypeptide = ADP + phosphate + an unfolded polypeptide.. Functionally, together with its co-chaperonin GroES, plays an essential role in assisting protein folding. The GroEL-GroES system forms a nano-cage that allows encapsulation of the non-native substrate proteins and provides a physical environment optimized to promote and accelerate protein folding. The chain is Chaperonin GroEL from Staphylococcus carnosus (strain TM300).